We begin with the raw amino-acid sequence, 498 residues long: GTPase Der (498 aa).

EngA-type G domains lie at 3–166 (PVVA…FEEL) and 212–385 (IKFA…RSAT). GTP contacts are provided by residues 9–16 (GRPNVGKS), 56–60 (DTGGI), 118–121 (NKTD), 218–225 (GRPNVGKS), 265–269 (DTAGV), and 330–333 (NKWD). The KH-like domain maps to 386-470 (KRISTSMLTR…PIHIEFQEGD (85 aa)).

This sequence belongs to the TRAFAC class TrmE-Era-EngA-EngB-Septin-like GTPase superfamily. EngA (Der) GTPase family. As to quaternary structure, associates with the 50S ribosomal subunit.

GTPase that plays an essential role in the late steps of ribosome biogenesis. This chain is GTPase Der, found in Tolumonas auensis (strain DSM 9187 / NBRC 110442 / TA 4).